A 229-amino-acid chain; its full sequence is Small ribosomal subunit protein uS3 (229 aa).

The region spanning 39–107 (VRKFLEKKLK…PAQINIAEIR (69 aa)) is the KH type-2 domain.

This sequence belongs to the universal ribosomal protein uS3 family. Part of the 30S ribosomal subunit. Forms a tight complex with proteins S10 and S14.

In terms of biological role, binds the lower part of the 30S subunit head. Binds mRNA in the 70S ribosome, positioning it for translation. The chain is Small ribosomal subunit protein uS3 from Shewanella loihica (strain ATCC BAA-1088 / PV-4).